The following is a 596-amino-acid chain: Leucine-rich repeat and IQ domain-containing protein 4 (596 aa).

LRR repeat units follow at residues 22 to 44, 59 to 83, 84 to 106, 108 to 129, 130 to 152, 153 to 176, 177 to 200, 202 to 223, 224 to 246, 248 to 269, 270 to 293, 295 to 315, 317 to 337, 338 to 361, 362 to 384, 385 to 407, 410 to 433, 434 to 457, 459 to 479, 480 to 502, 504 to 525, and 527 to 549; these read LPRL…LLRQ, LTDR…ILAL, KELE…IQQL, NTKV…LGAL, SSLE…VVSR, LRTL…ICKS, LHHL…IVNQ, KLRE…LCVL, YNLE…IGHL, RLQK…LSQC, SKLS…ELLT, LTEV…LCSW, SLHL…SFKR, LINL…ICAL, KNLE…ISLL, SNLK…IFSL, LEKL…IKRL, MNLK…GLMP, LEVL…ICRT, RNLR…LDHL, NLKV…VCNQ, and NEAI…TIQA. The IQ domain occupies 540 to 569; the sequence is RKMMATTIQAWWRGIMVRKGYGSYEELLKA. Residues 569 to 587 are compositionally biased toward basic residues; that stretch reads ARKKGKSPPKDKKGKKAAK. The interval 569-596 is disordered; sequence ARKKGKSPPKDKKGKKAAKGKPEKGNKK.

The sequence is that of Leucine-rich repeat and IQ domain-containing protein 4 (Lrriq4) from Mus musculus (Mouse).